The sequence spans 319 residues: 7-methylguanosine phosphate-specific 5'-nucleotidase (319 aa).

The active-site Nucleophile is the Asp-55. Positions 55 and 57 each coordinate Mg(2+). The active-site Proton donor is Asp-57. Position 103 (Glu-103) interacts with CMP. N(7)-methyl-GMP contacts are provided by Glu-103 and Ser-124. 171-172 is a substrate binding site; that stretch reads SA. Asp-245 provides a ligand contact to Mg(2+).

The protein belongs to the pyrimidine 5'-nucleotidase family. As to quaternary structure, monomer. Mg(2+) serves as cofactor.

The enzyme catalyses N(7)-methyl-GMP + H2O = N(7)-methylguanosine + phosphate. The catalysed reaction is CMP + H2O = cytidine + phosphate. It catalyses the reaction a ribonucleoside 5'-phosphate + H2O = a ribonucleoside + phosphate. Inhibited by high levels of AMP. Specifically hydrolyzes 7-methylguanosine monophosphate (m(7)GMP) to 7-methylguanosine and inorganic phosphate. Also able to mediate hydrolysis of diphosphate (m(7)GDP) to 7-methylguanosine and 2 inorganic phosphate with lower activity. The specific activity for m(7)GMP may protect cells against undesired salvage of m(7)GMP and its incorporation into nucleic acids. Also has weak activity for CMP. UMP and purine nucleotides are poor substrates. This Drosophila melanogaster (Fruit fly) protein is 7-methylguanosine phosphate-specific 5'-nucleotidase.